The following is a 1956-amino-acid chain: Probable cation-transporting ATPase 1 (1956 aa).

The Cytoplasmic segment spans residues 1–35; that stretch reads MHLMCTGLRNEKLINDRKILYGECNLNIKSDSFII. The chain crosses the membrane as a helical span at residues 36–58; it reads LLFKEIMNPFFIFQIFAMIVWSL. The Extracellular portion of the chain corresponds to 59-61; the sequence is DNY. The chain crosses the membrane as a helical span at residues 62–80; the sequence is IEYTISILFITSISIILEL. Topologically, residues 81-407 are cytoplasmic; that stretch reads KNTIKNQKKI…KKELNLINDS (327 aa). Residues 408 to 427 form a helical membrane-spanning segment; it reads YKFLIILIIYALFSVFILLY. Topologically, residues 428–440 are extracellular; that stretch reads ITLSNNEYTNHII. Residues 441 to 462 traverse the membrane as a helical segment; the sequence is IKCLDIITDAIPPALPTTLTVG. Over 463–1818 the chain is Cytoplasmic; the sequence is ISIAISRLKK…SLVNSFQLFK (1356 aa). Catalysis depends on D496, which acts as the 4-aspartylphosphate intermediate. Residues 901–938 form a disordered region; the sequence is YGNNNDDNNDDDNNNDDDNNDDNNNDDNNNDDNNDDNN. Acidic residues predominate over residues 907 to 935; sequence DNNDDDNNNDDDNNDDNNNDDNNNDDNND. Mg(2+) contacts are provided by D1760 and D1764. Residues 1819 to 1837 form a helical membrane-spanning segment; it reads FISLYSIMQCSQVLILYSI. At 1838-1845 the chain is on the extracellular side; sequence SNKLTDNQ. A helical transmembrane segment spans residues 1846–1863; it reads YIFIDIVTILPLSIFMCW. Residues 1864 to 1881 are Cytoplasmic-facing; that stretch reads TSASEKLSKNIPIGKLFS. The helical transmembrane segment at 1882-1905 threads the bilayer; the sequence is FPILISIYGQIIIQLFFVMISLVV. Residues 1906–1928 lie on the Extracellular side of the membrane; sequence LMNLSFYKYDKNKVMKEKSDDTY. The helical transmembrane segment at 1929–1952 threads the bilayer; that stretch reads LYKAQKYTLIYSLLFSKFVYVYIF. Topologically, residues 1953 to 1956 are cytoplasmic; it reads KYKE.

Belongs to the cation transport ATPase (P-type) (TC 3.A.3) family. Type V subfamily.

It localises to the membrane. The catalysed reaction is ATP + H2O = ADP + phosphate + H(+). The protein is Probable cation-transporting ATPase 1 of Plasmodium falciparum.